Here is a 190-residue protein sequence, read N- to C-terminus: Riboflavin transporter FmnP (190 aa).

Residues 1-5 (MKVKK) lie on the Extracellular side of the membrane. Residues 6–26 (LVVVSMLSSIAFVLMLLNFPF) form a helical membrane-spanning segment. The Cytoplasmic segment spans residues 27–39 (PGLPDYLKIDFSD). A helical membrane pass occupies residues 40–60 (VPAIIAILIYGPLAGIAVEAI). The Extracellular segment spans residues 61 to 76 (KNVLQYIIQGSMAGVP). The chain crosses the membrane as a helical span at residues 77 to 97 (VGQVANFIAGTLFILPTAFLF). The Cytoplasmic portion of the chain corresponds to 98-109 (KKLNSAKGLAVS). A helical membrane pass occupies residues 110 to 130 (LLLGTAAMTILMSILNYVLIL). Topologically, residues 131 to 154 (PAYTWFLHSPALSDSALKTAVVAG) are extracellular. A helical transmembrane segment spans residues 155–175 (ILPFNMIKGIVITVVFSLIFI). Residues 176 to 190 (KLKPWIEQQRSAHIH) are Cytoplasmic-facing.

It belongs to the prokaryotic riboflavin transporter (P-RFT) (TC 2.A.87) family. Forms a stable energy-coupling factor (ECF) transporter complex composed of a membrane-embedded substrate-binding protein (S component), 2 ATP-binding proteins (A component) and 2 transmembrane proteins (T component). May be able to interact with more than 1 S component at a time.

The protein resides in the cell membrane. With respect to regulation, inhibited by excess of riboflavin or FMN. Also inhibited by protonophores such as CCCP and FCCP or in the absence of glucose. Functionally, mediates uptake of riboflavin and roseoflavin, a toxic riboflavin analog; may also transport FMN. Probably a riboflavin-binding protein that interacts with the energy-coupling factor (ECF) ABC-transporter complex. Unlike classic ABC transporters this ECF transporter provides the energy necessary to transport a number of different substrates. The substrates themselves are bound by transmembrane, not extracytoplasmic soluble proteins. In Bacillus subtilis (strain 168), this protein is Riboflavin transporter FmnP (fmnP).